A 435-amino-acid chain; its full sequence is MSEFRQATDAFASNPVESKQEIRNYTMNFGPQHPAAHGVLRLILEMDGETVVRADPHIGLLHRGTEKLAESKPFNQSVPYMDRLDYVSMMCNEHAYVRAIESLMGIQAPERAQYIRTMFDEITRIKNHLMWVGSNALDLGAMAVMLYAFREREELMDVYEAVSGARMHAAYYRPGGVYRDLPDRMPQYKESRWHKGGALKKRNAGREGTMLDFLEEFTNTFPARVDEYETLLTDNRIWKQRTVDVGIISPDLARAWGMTGPMLRGSGIEWDLRKKQPYAKYDAVDFDIPVGTNGDCYDRYLVRVAEMRESNRIIKQCVKWLKANPGPVMVTNFKVAPPSREGMKDDMEALIHHFKLFSEGYCVPAGETYSAVEAPKGEFGCYLMSDGANKPFRVHLRAPGFAHLSSMDAVVRGYLLADVVAMIGTYDLVFGEVDR.

Belongs to the complex I 49 kDa subunit family. In terms of assembly, NDH-1 is composed of 14 different subunits. Subunits NuoB, C, D, E, F, and G constitute the peripheral sector of the complex.

It localises to the cell inner membrane. The catalysed reaction is a quinone + NADH + 5 H(+)(in) = a quinol + NAD(+) + 4 H(+)(out). NDH-1 shuttles electrons from NADH, via FMN and iron-sulfur (Fe-S) centers, to quinones in the respiratory chain. The immediate electron acceptor for the enzyme in this species is believed to be ubiquinone. Couples the redox reaction to proton translocation (for every two electrons transferred, four hydrogen ions are translocated across the cytoplasmic membrane), and thus conserves the redox energy in a proton gradient. In Xanthomonas axonopodis pv. citri (strain 306), this protein is NADH-quinone oxidoreductase subunit D.